Consider the following 314-residue polypeptide: Probable serine/threonine-protein kinase WNK11 (314 aa).

Residues 1–22 (MMTCASSDDNESEKDKDSESFV) are disordered. A Protein kinase domain is found at 31 to 289 (GRYGELLGSG…AAELLCDPFF (259 aa)). 111-114 (TEIC) is an ATP binding site. D178 (proton acceptor) is an active-site residue. The segment at 295-314 (DDDEDGENNDNNGAGRIVVS) is disordered.

The protein belongs to the protein kinase superfamily. Ser/Thr protein kinase family. WNK subfamily.

It catalyses the reaction L-seryl-[protein] + ATP = O-phospho-L-seryl-[protein] + ADP + H(+). The catalysed reaction is L-threonyl-[protein] + ATP = O-phospho-L-threonyl-[protein] + ADP + H(+). Its function is as follows. May regulate flowering time by modulating the photoperiod pathway. The polypeptide is Probable serine/threonine-protein kinase WNK11 (WNK11) (Arabidopsis thaliana (Mouse-ear cress)).